Here is an 89-residue protein sequence, read N- to C-terminus: Probable Fe(2+)-trafficking protein (89 aa).

The protein belongs to the Fe(2+)-trafficking protein family.

Its function is as follows. Could be a mediator in iron transactions between iron acquisition and iron-requiring processes, such as synthesis and/or repair of Fe-S clusters in biosynthetic enzymes. This Legionella pneumophila (strain Lens) protein is Probable Fe(2+)-trafficking protein.